A 379-amino-acid chain; its full sequence is Gonadotropin-releasing hormone II receptor (379 aa).

Over 1-45 the chain is Extracellular; sequence MSGNTTLLLSNPTNVLDNSSVLNVSVSPPVLKWETPTFTTAARFR. 3 N-linked (GlcNAc...) asparagine glycosylation sites follow: asparagine 4, asparagine 18, and asparagine 23. The helical transmembrane segment at 46 to 65 threads the bilayer; sequence VAATLVLFVFAAASNLSVLL. Residues 66-80 are Cytoplasmic-facing; that stretch reads SVTRGRGRRLASHLR. Residues 81–100 form a helical membrane-spanning segment; that stretch reads PLIASLASADLVMTFVVMPL. The Extracellular segment spans residues 101-118; that stretch reads DAVWNVTVQWYAGDAMCK. Asparagine 105 carries an N-linked (GlcNAc...) asparagine glycan. Cysteine 117 and cysteine 194 are joined by a disulfide. Residues 119–140 form a helical membrane-spanning segment; it reads LMCFLKLFAMHSAAFILVVVSL. Topologically, residues 141–167 are cytoplasmic; sequence DRHHAILHPLDTLDAGRRNRRMLLTAW. Residues 168–184 form a helical membrane-spanning segment; that stretch reads ILSLLLASPQLFIFRAI. Topologically, residues 185–210 are extracellular; the sequence is KAKGVDFVQCATHGSFQQHWQETAYN. A helical transmembrane segment spans residues 211-230; sequence MFHFVTLYVFPLLVMSLCYT. Over 231–283 the chain is Cytoplasmic; the sequence is RILVEINRQMHRSKDKAGEPCLRRSGTDMIPKARMKTLKMTIIIVASFVICWT. Residues 284 to 302 traverse the membrane as a helical segment; the sequence is PYYLLGIWYWFQPQMLHVI. Over 303–308 the chain is Extracellular; the sequence is PDYVHH. The chain crosses the membrane as a helical span at residues 309 to 328; the sequence is VFFVFGNLNTCCDPVIYGFF. Residues 329 to 379 lie on the Cytoplasmic side of the membrane; it reads TPSFRADLSRCFCWRNQNASAKSLPHFSGHRREVSGEAESDLGSGDQPSGQ. The segment at 355-379 is disordered; sequence FSGHRREVSGEAESDLGSGDQPSGQ.

It belongs to the G-protein coupled receptor 1 family. Post-translationally, phosphorylated on the C-terminal cytoplasmic tail.

It is found in the cell membrane. Its function is as follows. Receptor for gonadotropin releasing hormone II (GnRH II). This receptor mediates its action by association with G proteins that activate a phosphatidylinositol-calcium second messenger system. The sequence is that of Gonadotropin-releasing hormone II receptor from Clarias gariepinus (North African catfish).